Here is a 541-residue protein sequence, read N- to C-terminus: MNNQKNFLIVAIFLSVFLLWDKWGVTHVVGANGNLISQTKIKDASTINNSLTNKNLNASSIIHRNAELDLPNTITKNQAPFTTVVTDLLTLEISHKGGTIQNAWLNDYPIEINSEQKFQLLSNKADEIFQAQSGLLPQGQTPTHHSIFSSKNSHYQMDGNSLVVPFTWKSENGIKVIKRYHFNKNSYVIGIDYQITNTTNNTLNITSYTQLVRNALDQSNMIIPTYTGGARFDDQDVYEKIEFEDFNDQPKTTSKGGWIAMIEHYFFVAAIPDVNQIHTYSSKIINGEYLLTVVNPELVIAPGAIVTLPSSSLYIGPKEQKQINNVAPGLDKTVDYGVLFIIAKPLSELLNWIYSIIHSWGYSIITLTLLIKLAFYKLSEKSYRSMAGMRQLAPRLTKLKETYGDDKQKLGQKTMELYKKEKINPASGCLPILVQIPVFISLYWVLLEMVELRQAPFWYLTDLSAQDPYYILPLIMGVSMFAQQKLNPPPPDPMQAKIMMALPFVFTIFFLWFPSGLVLYWVVNNILSITQQWVINKRING.

The next 6 helical transmembrane spans lie at phenylalanine 7–histidine 27, tyrosine 289–proline 309, isoleucine 356–tyrosine 376, leucine 430–valine 450, leucine 463–glutamine 483, and isoleucine 498–valine 518.

The protein belongs to the OXA1/ALB3/YidC family. Type 1 subfamily. Interacts with the Sec translocase complex via SecD. Specifically interacts with transmembrane segments of nascent integral membrane proteins during membrane integration.

The protein localises to the cell inner membrane. Its function is as follows. Required for the insertion and/or proper folding and/or complex formation of integral membrane proteins into the membrane. Involved in integration of membrane proteins that insert both dependently and independently of the Sec translocase complex, as well as at least some lipoproteins. Aids folding of multispanning membrane proteins. In Ruthia magnifica subsp. Calyptogena magnifica, this protein is Membrane protein insertase YidC.